The following is a 351-amino-acid chain: Anthranilate phosphoribosyltransferase (351 aa).

Residues Gly85, 88-89, Ser93, 95-98, 113-121, and Thr125 contribute to the 5-phospho-alpha-D-ribose 1-diphosphate site; these read GD, NIST, and KHGNRAASS. Gly85 serves as a coordination point for anthranilate. Position 97 (Ser97) interacts with Mg(2+). Asn116 provides a ligand contact to anthranilate. Residue Arg171 coordinates anthranilate. Mg(2+) contacts are provided by Asp229 and Glu230.

Belongs to the anthranilate phosphoribosyltransferase family. As to quaternary structure, homodimer. It depends on Mg(2+) as a cofactor.

The catalysed reaction is N-(5-phospho-beta-D-ribosyl)anthranilate + diphosphate = 5-phospho-alpha-D-ribose 1-diphosphate + anthranilate. It functions in the pathway amino-acid biosynthesis; L-tryptophan biosynthesis; L-tryptophan from chorismate: step 2/5. Functionally, catalyzes the transfer of the phosphoribosyl group of 5-phosphorylribose-1-pyrophosphate (PRPP) to anthranilate to yield N-(5'-phosphoribosyl)-anthranilate (PRA). The protein is Anthranilate phosphoribosyltransferase of Saccharopolyspora erythraea (strain ATCC 11635 / DSM 40517 / JCM 4748 / NBRC 13426 / NCIMB 8594 / NRRL 2338).